A 210-amino-acid chain; its full sequence is Orotate phosphoribosyltransferase (210 aa).

5-phospho-alpha-D-ribose 1-diphosphate is bound by residues Arg97, Lys98, and 125–133; that span reads NDMVSSGKS. Orotate-binding residues include Ser129 and Arg157.

It belongs to the purine/pyrimidine phosphoribosyltransferase family. PyrE subfamily. In terms of assembly, homodimer. Mg(2+) serves as cofactor.

The enzyme catalyses orotidine 5'-phosphate + diphosphate = orotate + 5-phospho-alpha-D-ribose 1-diphosphate. The protein operates within pyrimidine metabolism; UMP biosynthesis via de novo pathway; UMP from orotate: step 1/2. Catalyzes the transfer of a ribosyl phosphate group from 5-phosphoribose 1-diphosphate to orotate, leading to the formation of orotidine monophosphate (OMP). The protein is Orotate phosphoribosyltransferase of Chlamydia pneumoniae (Chlamydophila pneumoniae).